A 430-amino-acid polypeptide reads, in one-letter code: Tektin-2 (430 aa).

2 coiled-coil regions span residues 81–162 (CLTD…FEKL) and 265–379 (FRKR…DIAC).

This sequence belongs to the tektin family. Microtubule inner protein component of sperm flagellar doublet microtubules. May interact with CCDC172. In terms of processing, tyrosine phosphorylated. Post-translationally, ubiquitinated, leading to its degradation. Deubiquitinated by USP16, promoting its stability. In terms of tissue distribution, expressed in trachea multiciliated cells.

The protein localises to the cytoplasm. The protein resides in the cytoskeleton. Its subcellular location is the cilium axoneme. It localises to the flagellum axoneme. It is found in the microtubule organizing center. Functionally, microtubule inner protein (MIP) part of the dynein-decorated doublet microtubules (DMTs) in cilia and flagellar axoneme. Plays a key role in the assembly or attachment of the inner dynein arm to microtubules in sperm flagella and tracheal cilia. Forms filamentous polymers in the walls of ciliary and flagellar microtubules. The sequence is that of Tektin-2 (TEKT2) from Bos taurus (Bovine).